We begin with the raw amino-acid sequence, 226 residues long: Acyl-homoserine-lactone synthase (226 aa).

Belongs to the autoinducer synthase family.

The catalysed reaction is a fatty acyl-[ACP] + S-adenosyl-L-methionine = an N-acyl-L-homoserine lactone + S-methyl-5'-thioadenosine + holo-[ACP] + H(+). Its function is as follows. Required for the synthesis of OHHL (N-(3-oxohexanoyl)-L-homoserine lactone), an autoinducer molecule. This chain is Acyl-homoserine-lactone synthase (psyI), found in Pseudomonas amygdali pv. tabaci (Pseudomonas syringae pv. tabaci).